The chain runs to 458 residues: Mitochondrial-processing peptidase subunit beta (458 aa).

The transit peptide at 1-41 directs the protein to the mitochondrion; the sequence is MYRRLASGLYQTSQRRIAQVQPKSVFVPETIVTTLPNGFRV. H73 is a Zn(2+) binding site. The active-site Proton acceptor is E76. Zn(2+)-binding residues include H77 and E153.

This sequence belongs to the peptidase M16 family. Heterodimer of mppa-1 (alpha) and mppb-1 (beta) subunits, forming the mitochondrial processing protease (MPP) in which mppa-1 is involved in substrate recognition and binding and mppb-1 is the catalytic subunit. Zn(2+) serves as cofactor.

The protein resides in the mitochondrion matrix. The catalysed reaction is Release of N-terminal transit peptides from precursor proteins imported into the mitochondrion, typically with Arg in position P2.. Its activity is regulated as follows. Binding to mppa-1 is required for catalytic activity. Inhibited by metal chelator ethylenediaminetetraacetic acid (EDTA). Catalytic subunit of the essential mitochondrial processing protease (MPP), which cleaves the mitochondrial sequence off newly imported precursors proteins. Preferentially, cleaves after an arginine at position P2. This Caenorhabditis elegans protein is Mitochondrial-processing peptidase subunit beta.